Here is a 481-residue protein sequence, read N- to C-terminus: UDP-N-acetylmuramoyl-L-alanyl-D-glutamate--L-lysine ligase (481 aa).

Residue S42 coordinates UDP-N-acetyl-alpha-D-muramoyl-L-alanyl-D-glutamate. 118 to 124 lines the ATP pocket; sequence GTKGKTT. Residues 160-161, S187, and R195 contribute to the UDP-N-acetyl-alpha-D-muramoyl-L-alanyl-D-glutamate site; that span reads TT. At K229 the chain carries N6-carboxylysine. The short motif at 404 to 407 is the L-lysine recognition motif element; sequence DDPN.

It belongs to the MurCDEF family. MurE subfamily. In terms of processing, carboxylation is probably crucial for Mg(2+) binding and, consequently, for the gamma-phosphate positioning of ATP.

The protein localises to the cytoplasm. It catalyses the reaction UDP-N-acetyl-alpha-D-muramoyl-L-alanyl-D-glutamate + L-lysine + ATP = UDP-N-acetyl-alpha-D-muramoyl-L-alanyl-gamma-D-glutamyl-L-lysine + ADP + phosphate + H(+). It participates in cell wall biogenesis; peptidoglycan biosynthesis. In terms of biological role, catalyzes the addition of L-lysine to the nucleotide precursor UDP-N-acetylmuramoyl-L-alanyl-D-glutamate (UMAG) in the biosynthesis of bacterial cell-wall peptidoglycan. The chain is UDP-N-acetylmuramoyl-L-alanyl-D-glutamate--L-lysine ligase from Streptococcus suis (strain 98HAH33).